A 359-amino-acid polypeptide reads, in one-letter code: MAARVCCQLDPARDVLCLRPVGAESRGRPVSRPFGPHPSPSSSAVPADHGAHLSLRGLPVCAFSSAGPCALRFTSARRMETTVNADQVLPKVLHKRTLGLSAMSTSDLEAYFKDCLFKDWEDLGEEIRLMIFVLGGCRHKLVCSPAPCNFFHLCLIISCSCPTVHASKLCLGWLWGMDIDPYKEFGASVELLSFLPSDFFPSIRDLLDTASALYREALESPEHCSPHHTALRQAILCWGELMNLATWVGSNLEDPASRELVVSYVNVNMGLKIRQLLWFHISCLTFGRETVLEYLVSFGVWIRTPPAYRPPNAPILSTLPETTVVRRRGRSPRRRTPSPRRRRSESPRRRRSQSRESQC.

Disordered regions lie at residues 25 to 48 (SRGR…VPAD) and 312 to 359 (NAPI…ESQC). A compositionally biased stretch (basic residues) spans 325–352 (VRRRGRSPRRRTPSPRRRRSESPRRRRS).

The sequence is that of Putative X-Core fused protein from Homo sapiens (Human).